Consider the following 420-residue polypeptide: Carbohydrate sulfotransferase 12 (420 aa).

The Cytoplasmic portion of the chain corresponds to 1–5; that stretch reads MAKSR. Residues 6-26 traverse the membrane as a helical; Signal-anchor for type II membrane protein segment; sequence LFCLLVALGSVFMILFIIVYW. The Lumenal segment spans residues 27–420; it reads DNVGTANLNL…YPKPDDLLSV (394 aa). 2 N-linked (GlcNAc...) asparagine glycosylation sites follow: Asn76 and Asn139. 176–182 contacts 3'-phosphoadenylyl sulfate; the sequence is PKVACTN. Residue Asn215 is glycosylated (N-linked (GlcNAc...) asparagine). Residue 251–259 participates in 3'-phosphoadenylyl sulfate binding; sequence RDPFVRLIS. Asn286 and Asn376 each carry an N-linked (GlcNAc...) asparagine glycan.

It belongs to the sulfotransferase 2 family.

It localises to the golgi apparatus membrane. It carries out the reaction chondroitin beta-D-glucuronate + n 3'-phosphoadenylyl sulfate = chondroitin 4'-sulfate + n adenosine 3',5'-bisphosphate + n H(+). Its function is as follows. Catalyzes the transfer of sulfate to position 4 of the N-acetylgalactosamine (GalNAc) residue of chondroitin and desulfated dermatan sulfate. Chondroitin sulfate constitutes the predominant proteoglycan present in cartilage and is distributed on the surfaces of many cells and extracellular matrices. This chain is Carbohydrate sulfotransferase 12 (chst12), found in Xenopus laevis (African clawed frog).